The following is a 66-amino-acid chain: Large ribosomal subunit protein bL35 (66 aa).

It belongs to the bacterial ribosomal protein bL35 family.

This is Large ribosomal subunit protein bL35 from Synechococcus sp. (strain ATCC 27144 / PCC 6301 / SAUG 1402/1) (Anacystis nidulans).